Consider the following 388-residue polypeptide: L-arabinitol 4-dehydrogenase (388 aa).

Zn(2+) contacts are provided by Cys-55, His-80, Glu-81, Cys-110, Cys-113, Cys-116, Cys-124, and Glu-165. Residues 192-193 (PI), Asp-213, Arg-218, Ile-293, and 317-319 (QYR) contribute to the NAD(+) site.

It belongs to the zinc-containing alcohol dehydrogenase family. Homotetramer. Zn(2+) serves as cofactor.

It carries out the reaction L-arabinitol + NAD(+) = L-xylulose + NADH + H(+). The protein operates within carbohydrate degradation; L-arabinose degradation via L-arabinitol; D-xylulose 5-phosphate from L-arabinose (fungal route): step 2/5. Functionally, catalyzes the NAD-dependent oxidation of L-arabinitol to L-xylulose in the fungal L-arabinose catabolic pathway. L-arabinose catabolism is important for using plant material as a carbon source. NADP cannot act as a cosubstrate. The polypeptide is L-arabinitol 4-dehydrogenase (lad) (Talaromyces emersonii (Thermophilic fungus)).